A 96-amino-acid chain; its full sequence is Co-chaperonin GroES (96 aa).

Belongs to the GroES chaperonin family. As to quaternary structure, heptamer of 7 subunits arranged in a ring. Interacts with the chaperonin GroEL.

Its subcellular location is the cytoplasm. In terms of biological role, together with the chaperonin GroEL, plays an essential role in assisting protein folding. The GroEL-GroES system forms a nano-cage that allows encapsulation of the non-native substrate proteins and provides a physical environment optimized to promote and accelerate protein folding. GroES binds to the apical surface of the GroEL ring, thereby capping the opening of the GroEL channel. In Methylibium petroleiphilum (strain ATCC BAA-1232 / LMG 22953 / PM1), this protein is Co-chaperonin GroES.